Reading from the N-terminus, the 95-residue chain is UPF0235 protein A2cp1_1215 (95 aa).

This sequence belongs to the UPF0235 family.

The protein is UPF0235 protein A2cp1_1215 of Anaeromyxobacter dehalogenans (strain 2CP-1 / ATCC BAA-258).